The chain runs to 334 residues: ABC transporter L-arabinose-binding periplasmic protein (334 aa).

An N-terminal signal peptide occupies residues 1-30 (MNRTIRRHTLRALLAALCIAPLGMQGAARA).

Belongs to the bacterial solute-binding protein 2 family. As to quaternary structure, the complex is composed of two ATP-binding proteins (AraG), two transmembrane proteins (AraH) and a solute-binding protein (AraF).

The protein resides in the periplasm. In terms of biological role, part of the ABC transporter complex AraFGH involved in L-arabinose import. Binds with high affinity to L-arabinose. This Azospirillum brasilense protein is ABC transporter L-arabinose-binding periplasmic protein (araF).